Here is a 457-residue protein sequence, read N- to C-terminus: tRNA-2-methylthio-N(6)-dimethylallyladenosine synthase (457 aa).

Residues 3–120 form the MTTase N-terminal domain; sequence KKVYVKTFGC…LPQMIDARRA (118 aa). [4Fe-4S] cluster is bound by residues Cys-12, Cys-49, Cys-83, Cys-157, Cys-161, and Cys-164. A Radical SAM core domain is found at 143–377; sequence RVEGPSAFVS…QATIEENVAR (235 aa). The 68-residue stretch at 380-447 folds into the TRAM domain; it reads QSMVGKVERI…PHSLRGELVL (68 aa).

It belongs to the methylthiotransferase family. MiaB subfamily. In terms of assembly, monomer. [4Fe-4S] cluster is required as a cofactor.

The protein resides in the cytoplasm. The enzyme catalyses N(6)-dimethylallyladenosine(37) in tRNA + (sulfur carrier)-SH + AH2 + 2 S-adenosyl-L-methionine = 2-methylsulfanyl-N(6)-dimethylallyladenosine(37) in tRNA + (sulfur carrier)-H + 5'-deoxyadenosine + L-methionine + A + S-adenosyl-L-homocysteine + 2 H(+). Catalyzes the methylthiolation of N6-(dimethylallyl)adenosine (i(6)A), leading to the formation of 2-methylthio-N6-(dimethylallyl)adenosine (ms(2)i(6)A) at position 37 in tRNAs that read codons beginning with uridine. In Burkholderia cenocepacia (strain HI2424), this protein is tRNA-2-methylthio-N(6)-dimethylallyladenosine synthase.